Reading from the N-terminus, the 468-residue chain is Glutamate--tRNA ligase 2 (468 aa).

A 'HIGH' region motif is present at residues 9 to 19; the sequence is PSPTGHLHIGG. Zn(2+) contacts are provided by Cys98, Cys100, Cys125, and His127. The 'KMSKS' region signature appears at 236–240; the sequence is RLSKR. An ATP-binding site is contributed by Lys239.

It belongs to the class-I aminoacyl-tRNA synthetase family. Glutamate--tRNA ligase type 1 subfamily. Monomer. Zn(2+) is required as a cofactor.

It is found in the cytoplasm. The catalysed reaction is tRNA(Glu) + L-glutamate + ATP = L-glutamyl-tRNA(Glu) + AMP + diphosphate. Its function is as follows. Catalyzes the attachment of glutamate to tRNA(Glu) in a two-step reaction: glutamate is first activated by ATP to form Glu-AMP and then transferred to the acceptor end of tRNA(Glu). This Methylococcus capsulatus (strain ATCC 33009 / NCIMB 11132 / Bath) protein is Glutamate--tRNA ligase 2.